Consider the following 655-residue polypeptide: Spastin (655 aa).

The Cytoplasmic segment spans residues 1–58 (MLFDLINSFLKNGINNSNNNNNNNNNKNNFYNSLEDDDYLLNNQTTKVSLYLYFFIFA). Positions 59–79 (FMFLVVDLIMLYYKHRENIES) form an intramembrane region, helical. The Cytoplasmic segment spans residues 80 to 655 (RETDLSLKLN…EKWNQKFGTI (576 aa)). A compositionally biased stretch (low complexity) spans 102–140 (KSSPTTSTTTTTITPTTTSSSQLRQPSTPKTTTKTINSP). The interval 102-151 (KSSPTTSTTTTTITPTTTSSSQLRQPSTPKTTTKTINSPPSTPKSPPPLP) is disordered. Pro residues predominate over residues 141–151 (PSTPKSPPPLP). Positions 169–232 (LNEAKSQIDS…KRAEYLKNEL (64 aa)) constitute an MIT domain. Residues 261 to 325 (EQQQQQQQQS…TITSPGNKYG (65 aa)) are disordered. Residues 262–320 (QQQQQQQQSSSTYRNSLNLSSSKSNSTINNRHSISSLSSLNSTTATTTTPSNTSTITSP) are compositionally biased toward low complexity. 424 to 431 (GPPGNGKT) provides a ligand contact to ATP.

Belongs to the AAA ATPase family. Spastin subfamily. Homohexamer. The homohexamer is stabilized by ATP-binding. The homohexamer may adopt a ring conformation through which microtubules pass prior to being severed. Interacts with microtubules.

The protein resides in the membrane. The protein localises to the cytoplasm. It localises to the cytoskeleton. It is found in the microtubule organizing center. Its subcellular location is the centrosome. The enzyme catalyses n ATP + n H2O + a microtubule = n ADP + n phosphate + (n+1) alpha/beta tubulin heterodimers.. ATP-dependent microtubule severing protein. Microtubule severing may promote reorganization of cellular microtubule arrays and the release of microtubules from the microtubule organizing center following nucleation. The sequence is that of Spastin from Dictyostelium discoideum (Social amoeba).